The following is a 574-amino-acid chain: Protein OBERON 2 (574 aa).

Polar residues-rich tracts occupy residues 1–10 (MGTSSGSNHP) and 65–76 (SMSQKTEPDSME). Residues 1-76 (MGTSSGSNHP…SQKTEPDSME (76 aa)) form a disordered region. The PHD-type zinc finger occupies 226 to 291 (LCMCTICNKF…VFKCRACNRT (66 aa)). A coiled-coil region spans residues 416-524 (KKARMALETC…LFEKIKLQEN (109 aa)).

In terms of assembly, self-interacts. Interacts with OBE1, OBE3 and OBE4. Binds to VPg of pea seed borne mosaic virus (PSbMV), turnip mosaic virus (TuMV) and lettuce mosaic virus (LMV), but not with VPg of tobacco etch virus (TEV), cowpea mosaic virus (CPMV), tomato black ring virus (TBRV) and grapevine fan leaf virus (GFLV). Expressed in roots, seedlings, stems, leaves, flowers and siliques, especially in the vasculature.

The protein resides in the nucleus. In terms of biological role, probable transcription factor that acts together with OBE1 for the maintenance and/or establishment of both the shoot and root meristems, probably by controlling the expression of the meristem genes such as WUS, PLT1 and PLT2 and of genes required for auxin responses. Promotes cell meristematic activity via the WUSCHEL-CLAVATA pathway. Involved in the development of the basal pole and in auxin-mediated root and vascular development in the embryo. Confers sensitivity to turnip mosaic virus (TuMV) probably by promoting viral movement and multiplication via interaction with TuMV VPg. The polypeptide is Protein OBERON 2 (Arabidopsis thaliana (Mouse-ear cress)).